The primary structure comprises 359 residues: Type-1 angiotensin II receptor (359 aa).

Residues 1–25 (MILNSSTEDGIKRIQDDCPKAGRHN) are Extracellular-facing. Residue Asn-4 is glycosylated (N-linked (GlcNAc...) asparagine). The angiotensin II site is built by Gln-15 and Asp-17. 2 disulfides stabilise this stretch: Cys-18–Cys-274 and Cys-101–Cys-180. A helical membrane pass occupies residues 26 to 55 (YIFIMIPTLYSIIFVVGIFGNSLVVIVIYF). Topologically, residues 56–61 (YMKLKT) are cytoplasmic. A helical transmembrane segment spans residues 62-89 (VASVFLLNLALADLCFLLTLPLWAVYTA). Over 90 to 98 (MEYRWPFGN) the chain is Extracellular. The helical transmembrane segment at 99-125 (YLCKIASASVSFNLYASVFLLTCLSID) threads the bilayer. At 126–141 (RYLAIVHPMKSRLRRT) the chain is on the cytoplasmic side. Residues 142–165 (MLVAKVTCIIIWLLAGLASLPTII) traverse the membrane as a helical segment. The Extracellular segment spans residues 166 to 190 (HRNVFFIENTNITVCAFHYESQNST). Arg-167 contacts angiotensin II. The N-linked (GlcNAc...) asparagine glycan is linked to Asn-176. Phe-182, His-183, and Tyr-184 together coordinate angiotensin II. Asn-188 carries N-linked (GlcNAc...) asparagine glycosylation. A helical transmembrane segment spans residues 191-216 (LPVGLGLTKNILGFLFPFLIILTSYT). Lys-199 is a binding site for angiotensin II. Residues 217 to 239 (LIWKTLKKAYEIQKNKPRKDDIF) are Cytoplasmic-facing. A helical membrane pass occupies residues 240-268 (KIILAIVLFFFFSWVPHQIFTFMDVLIQL). The Extracellular portion of the chain corresponds to 269 to 278 (GLIRDCKIED). Residues 279–304 (IVDTAMPITICLAYFNNCLNPLFYGF) form a helical membrane-spanning segment. Residues 305–359 (LGKKFKKYFLQLLKYIPPKAKSHSNLSTKMSTLSYRPSENGNSSTKKPAPCIEVE) are Cytoplasmic-facing. Over residues 336-350 (TLSYRPSENGNSSTK) the composition is skewed to polar residues. Residues 336–359 (TLSYRPSENGNSSTKKPAPCIEVE) are disordered. The S-palmitoyl cysteine moiety is linked to residue Cys-355.

Belongs to the G-protein coupled receptor 1 family. Interacts with MAS1. Interacts with ARRB1. Interacts with FLNA (via filamin repeat 21); increases PKA-mediated phosphorylation of FLNA. Post-translationally, C-terminal Ser or Thr residues may be phosphorylated. As to expression, adrenal medulla, cortex and kidney.

It localises to the cell membrane. In terms of biological role, receptor for angiotensin II, a vasoconstricting peptide, which acts as a key regulator of blood pressure and sodium retention by the kidney. The activated receptor in turn couples to G-alpha proteins G(q) (GNAQ, GNA11, GNA14 or GNA15) and thus activates phospholipase C and increases the cytosolic Ca(2+) concentrations, which in turn triggers cellular responses such as stimulation of protein kinase C. The chain is Type-1 angiotensin II receptor (AGTR1) from Bos taurus (Bovine).